Reading from the N-terminus, the 115-residue chain is Dolichyl-diphosphooligosaccharide--protein glycosyltransferase subunit DAD1 (115 aa).

Residues 1-31 (MVKSTSKDAQDLFRSLRSAYSATPTNLKIID) are Cytoplasmic-facing. The chain crosses the membrane as a helical span at residues 32–52 (LYVVFAVFTALIQVVYMALVG). Topologically, residues 53–55 (SFP) are lumenal. The helical transmembrane segment at 56-76 (FNSFLSGVLSCIGTAVLAVCL) threads the bilayer. The Cytoplasmic segment spans residues 77 to 94 (RIQVNKENKEFKDLAPER). The chain crosses the membrane as a helical span at residues 95–115 (AFADFVLCNLVLHLVIINFLG).

The protein belongs to the DAD/OST2 family. Component of the oligosaccharyltransferase (OST) complex. In terms of tissue distribution, ubiquitous.

It localises to the endoplasmic reticulum membrane. It functions in the pathway protein modification; protein glycosylation. Functionally, subunit of the oligosaccharyl transferase (OST) complex that catalyzes the initial transfer of a defined glycan (Glc(3)Man(9)GlcNAc(2) in eukaryotes) from the lipid carrier dolichol-pyrophosphate to an asparagine residue within an Asn-X-Ser/Thr consensus motif in nascent polypeptide chains, the first step in protein N-glycosylation. N-glycosylation occurs cotranslationally and the complex associates with the Sec61 complex at the channel-forming translocon complex that mediates protein translocation across the endoplasmic reticulum (ER). All subunits are required for a maximal enzyme activity. The sequence is that of Dolichyl-diphosphooligosaccharide--protein glycosyltransferase subunit DAD1 (DAD1) from Arabidopsis thaliana (Mouse-ear cress).